Reading from the N-terminus, the 388-residue chain is uncharacterized protein (388 aa).

This is an uncharacterized protein from Klebsiella pneumoniae.